Reading from the N-terminus, the 248-residue chain is MSDQPDLFGTPTGAKAPHAIMPAGLPASWKEALAEEFAAPYFHALKDFLVEERRTHTVYPPAADVFNALRYTPLENVKVMILGQDPYHGPGQAHGLSFSVRPGVRIPPSLKNIYKELQSDIPGFTPPRHGYLKAWAEQGVLLLNAVLTVRAGEANSHAGKGWESFTDAVIRAVNNRPQRVVFVLWGAYARKKARLITAPHHVIIESAHPSPLSVTRFMGTRPFSRVNAALEEAGEAPIDWQLPAQVEE.

The active-site Proton acceptor is Asp85.

Belongs to the uracil-DNA glycosylase (UDG) superfamily. UNG family.

It localises to the cytoplasm. It catalyses the reaction Hydrolyzes single-stranded DNA or mismatched double-stranded DNA and polynucleotides, releasing free uracil.. Its function is as follows. Excises uracil residues from the DNA which can arise as a result of misincorporation of dUMP residues by DNA polymerase or due to deamination of cytosine. The chain is Uracil-DNA glycosylase from Deinococcus deserti (strain DSM 17065 / CIP 109153 / LMG 22923 / VCD115).